The primary structure comprises 44 residues: Photosystem I reaction center subunit IX (44 aa).

A helical membrane pass occupies residues Tyr-7–Ile-27.

The protein belongs to the PsaJ family.

The protein resides in the plastid. The protein localises to the chloroplast thylakoid membrane. In terms of biological role, may help in the organization of the PsaE and PsaF subunits. This is Photosystem I reaction center subunit IX from Piper cenocladum (Ant piper).